Consider the following 648-residue polypeptide: DNA gyrase subunit B (648 aa).

A Toprim domain is found at 432–546 (RELFIVEGNS…YGFVYLAQPP (115 aa)). Mg(2+) contacts are provided by Glu438, Asp511, and Asp513.

The protein belongs to the type II topoisomerase GyrB family. As to quaternary structure, heterotetramer, composed of two GyrA and two GyrB chains. In the heterotetramer, GyrA contains the active site tyrosine that forms a transient covalent intermediate with DNA, while GyrB binds cofactors and catalyzes ATP hydrolysis. Mg(2+) is required as a cofactor. Requires Mn(2+) as cofactor. It depends on Ca(2+) as a cofactor.

Its subcellular location is the cytoplasm. The catalysed reaction is ATP-dependent breakage, passage and rejoining of double-stranded DNA.. Its function is as follows. A type II topoisomerase that negatively supercoils closed circular double-stranded (ds) DNA in an ATP-dependent manner to modulate DNA topology and maintain chromosomes in an underwound state. Negative supercoiling favors strand separation, and DNA replication, transcription, recombination and repair, all of which involve strand separation. Also able to catalyze the interconversion of other topological isomers of dsDNA rings, including catenanes and knotted rings. Type II topoisomerases break and join 2 DNA strands simultaneously in an ATP-dependent manner. The sequence is that of DNA gyrase subunit B from Metamycoplasma hominis (strain ATCC 23114 / DSM 25592 / NBRC 14850 / NCTC 10111 / PG21) (Mycoplasma hominis).